We begin with the raw amino-acid sequence, 361 residues long: Glycerophosphodiester phosphodiesterase GDPD1, chloroplastic (361 aa).

Residues 1–53 constitute a chloroplast transit peptide; that stretch reads MSLKAIHVSEVPSLDHFPENPSLICSSRKANNKFVVVGHRGHGMNMSQSPDLR. The 270-residue stretch at 54–323 folds into the GP-PDE domain; it reads FSALKENSIL…DHVEEITEAV (270 aa).

The protein belongs to the glycerophosphoryl diester phosphodiesterase family. The cofactor is Mg(2+). In terms of tissue distribution, expressed in roots, shoots, rosette leaves, stems, flowers and siliques.

It localises to the plastid. The protein localises to the chloroplast. The catalysed reaction is a sn-glycero-3-phosphodiester + H2O = an alcohol + sn-glycerol 3-phosphate + H(+). Its function is as follows. Hydrolyzes glycerolphosphoglycerol, glycerophosphocholine and glycerophosphoethanolamine in vitro. May be involved in release of inorganic phosphate (Pi) from phospholipids during Pi starvation. The protein is Glycerophosphodiester phosphodiesterase GDPD1, chloroplastic of Arabidopsis thaliana (Mouse-ear cress).